The sequence spans 86 residues: Small ribosomal subunit protein uS15c (86 aa).

The protein belongs to the universal ribosomal protein uS15 family. Part of the 30S ribosomal subunit.

It is found in the plastid. Its subcellular location is the chloroplast. The sequence is that of Small ribosomal subunit protein uS15c (rps15) from Cryptomeria japonica (Japanese cedar).